A 722-amino-acid polypeptide reads, in one-letter code: Polyribonucleotide nucleotidyltransferase (722 aa).

Mg(2+) contacts are provided by D495 and D501. Positions 561 to 620 (PRLYVMKINPEKIREVIGKGGETIRSITKDTGCEINIEEDGTITIASVSSEGAEAAKKRI) constitute a KH domain. The 71-residue stretch at 630–700 (GKVYEGTVVK…DRGRIRLSIK (71 aa)) folds into the S1 motif domain.

Belongs to the polyribonucleotide nucleotidyltransferase family. Mg(2+) serves as cofactor.

The protein resides in the cytoplasm. The catalysed reaction is RNA(n+1) + phosphate = RNA(n) + a ribonucleoside 5'-diphosphate. Its function is as follows. Involved in mRNA degradation. Catalyzes the phosphorolysis of single-stranded polyribonucleotides processively in the 3'- to 5'-direction. This is Polyribonucleotide nucleotidyltransferase from Chromobacterium violaceum (strain ATCC 12472 / DSM 30191 / JCM 1249 / CCUG 213 / NBRC 12614 / NCIMB 9131 / NCTC 9757 / MK).